The chain runs to 611 residues: Zinc metalloproteinase nas-31 (611 aa).

The first 17 residues, 1 to 17, serve as a signal peptide directing secretion; sequence MILQLLFYSLFTHLAVS. A propeptide spanning residues 18–158 is cleaved from the precursor; the sequence is QIDVNQALNQ…TVSTASRARR (141 aa). N-linked (GlcNAc...) asparagine glycosylation is found at Asn53 and Asn67. Polar residues predominate over residues 82–95; it reads NAGTNQENGATEQQ. The segment at 82–103 is disordered; sequence NAGTNQENGATEQQKPLREKPR. The region spanning 159 to 354 is the Peptidase M12A domain; the sequence is QAYRDRYYPS…SMMNEHYKCK (196 aa). N-linked (GlcNAc...) asparagine glycosylation is present at Asn200. Intrachain disulfides connect Cys203/Cys353, Cys224/Cys243, Cys357/Cys376, Cys379/Cys390, Cys397/Cys428, Cys455/Cys476, Cys532/Cys564, Cys539/Cys557, and Cys548/Cys561. His251 is a binding site for Zn(2+). The active site involves Glu252. Zn(2+) contacts are provided by His255 and His261. Positions 340 to 396 constitute an EGF-like domain; sequence GFYDISMMNEHYKCKELCPAASSAQCKNGGFPSPRNCAICICPSGYGGILCDQRPPG. The CUB domain occupies 397–516; sequence CGDSVTATTT…LEYRAVTPSV (120 aa). Asn424 carries an N-linked (GlcNAc...) asparagine glycan. The ShKT domain maps to 532-564; sequence CQDLHPNCDFYKFFGMCRSKKIRSNCKFTCHDC.

The cofactor is Zn(2+). As to expression, expressed in excretory cell and in amphid and phasmid sheath glia.

Its subcellular location is the secreted. Metalloprotease. This is Zinc metalloproteinase nas-31 (nas-31) from Caenorhabditis elegans.